Here is a 205-residue protein sequence, read N- to C-terminus: MPGLLGKKIGMTSVFSAEGKNLPCTVIEVGPCVVTQIKTLEKDGYEAVQLGFQEKKEKHTTQPEMGHFKKAGVAPQRHLAEFKNFETEYKLGDVITVDFLEDAGFVDVVGTSKGKGFQGVVKRHGFGGVGQTTHGQHNRARKPGSIGACSYPAKVFKGMRMGGQMGNERVTVQNLQVIKVMPEHNLLLVKGSVPGAKGSILLIEK.

The protein belongs to the universal ribosomal protein uL3 family. As to quaternary structure, part of the 50S ribosomal subunit. Forms a cluster with proteins L14 and L19.

In terms of biological role, one of the primary rRNA binding proteins, it binds directly near the 3'-end of the 23S rRNA, where it nucleates assembly of the 50S subunit. The protein is Large ribosomal subunit protein uL3 of Parabacteroides distasonis (strain ATCC 8503 / DSM 20701 / CIP 104284 / JCM 5825 / NCTC 11152).